Consider the following 298-residue polypeptide: Trimeric intracellular cation channel type A (298 aa).

Residues 1-18 (MDLMSALSLGELALSFSR) lie on the Lumenal side of the membrane. Residues 19 to 39 (VPLFPVFDLSYFIVSIIYLKY) form a helical membrane-spanning segment. Residues 40-51 (EPGAVELSRRHP) are Cytoplasmic-facing. The chain crosses the membrane as a helical span at residues 52-72 (VASWLCAMLHCFGSYILADLL). The Lumenal portion of the chain corresponds to 73–85 (LGEPIIDYFSNSS). Gly-74 lines the Ca(2+) pocket. The chain crosses the membrane as a helical span at residues 86–106 (SILLASGVWYLIFFCPLDLFY). At 107–144 (KCVCFLPVKLIFVAMKEVVRVRKIAVGIHHAHHHYHHG) the chain is on the cytoplasmic side. Lys-122 and Arg-126 together coordinate a 1,2-diacyl-sn-glycero-3-phospho-(1D-myo-inositol-4,5-bisphosphate). A helical transmembrane segment spans residues 145–165 (WFIMIATGWVKGSGVALLSNV). The Lumenal portion of the chain corresponds to 166 to 178 (EQLLRGVWKPETN). A helical membrane pass occupies residues 179 to 199 (EILHMSFPTKASLYGAILFTL). The Cytoplasmic segment spans residues 200–209 (QQTRWLPVSK). The helical transmembrane segment at 210–230 (ASLIFVFTMFMVSCKVFLTAT) threads the bilayer. The Lumenal portion of the chain corresponds to 231-234 (HSHS). Residues 235-255 (SPFDILEGYICPVLFGATWGG) traverse the membrane as a helical segment. At 256–298 (DHHHDNHGAPHGMGLGTQHSGLPAKAKEELGEGSRKKKTKKAD) the chain is on the cytoplasmic side. A disordered region spans residues 260–298 (DNHGAPHGMGLGTQHSGLPAKAKEELGEGSRKKKTKKAD). The span at 280–289 (KAKEELGEGS) shows a compositional bias: basic and acidic residues.

This sequence belongs to the TMEM38 family. As to quaternary structure, homotrimer; conformation seems to be controled by binding to diacylglycerol (DAG). In terms of tissue distribution, expressed at high levels in heart and striated muscle. Also detected in brain, lung and kidney.

It localises to the sarcoplasmic reticulum membrane. It is found in the nucleus membrane. The enzyme catalyses K(+)(in) = K(+)(out). Its activity is regulated as follows. Channel activity is activated by a change of voltage within the sarcoplasmic reticulum lumen and blocked by luminal high Ca(2+) levels. Functionally, intracellular monovalent cation channel required for maintenance of rapid intracellular calcium release. Acts as a potassium counter-ion channel that functions in synchronization with calcium release from intracellular stores. Opened by a change of voltage within the sarcoplasmic reticulum lumen. In Mus musculus (Mouse), this protein is Trimeric intracellular cation channel type A (Tmem38a).